The following is a 200-amino-acid chain: LHFPL tetraspan subfamily member 6 protein (200 aa).

A signal peptide spans 1–23; the sequence is MASSLTCTGVIWALLSFLSAATS. 3 consecutive transmembrane segments (helical) span residues 84–104, 123–143, and 166–186; these read ICTI…LTAL, GIQF…PLGW, and IGWA…LCTW.

It belongs to the LHFP family.

It localises to the membrane. In Rattus norvegicus (Rat), this protein is LHFPL tetraspan subfamily member 6 protein.